The primary structure comprises 319 residues: ATP-dependent 6-phosphofructokinase (319 aa).

G11 serves as a coordination point for ATP. 21–25 (RAVVR) contributes to the ADP binding site. Residues 72–73 (RC) and 102–105 (GDGS) each bind ATP. D103 contributes to the Mg(2+) binding site. 125–127 (TID) is a binding site for substrate. Catalysis depends on D127, which acts as the Proton acceptor. ADP is bound at residue R154. Substrate contacts are provided by residues R162 and 169–171 (MGR). ADP contacts are provided by residues 185–187 (GAE), R211, and 213–215 (KKH). Substrate contacts are provided by residues E222, R243, and 249–252 (HMQR).

The protein belongs to the phosphofructokinase type A (PFKA) family. ATP-dependent PFK group I subfamily. Prokaryotic clade 'B1' sub-subfamily. As to quaternary structure, homotetramer. The cofactor is Mg(2+).

It is found in the cytoplasm. It catalyses the reaction beta-D-fructose 6-phosphate + ATP = beta-D-fructose 1,6-bisphosphate + ADP + H(+). The protein operates within carbohydrate degradation; glycolysis; D-glyceraldehyde 3-phosphate and glycerone phosphate from D-glucose: step 3/4. Allosterically activated by ADP and other diphosphonucleosides, and allosterically inhibited by phosphoenolpyruvate. Its function is as follows. Catalyzes the phosphorylation of D-fructose 6-phosphate to fructose 1,6-bisphosphate by ATP, the first committing step of glycolysis. The sequence is that of ATP-dependent 6-phosphofructokinase from Macrococcus caseolyticus (strain JCSC5402) (Macrococcoides caseolyticum).